The primary structure comprises 239 residues: Ribonuclease PH (239 aa).

Phosphate is bound by residues Arg87 and 125–127 (GTR).

It belongs to the RNase PH family. As to quaternary structure, homohexameric ring arranged as a trimer of dimers.

The catalysed reaction is tRNA(n+1) + phosphate = tRNA(n) + a ribonucleoside 5'-diphosphate. Phosphorolytic 3'-5' exoribonuclease that plays an important role in tRNA 3'-end maturation. Removes nucleotide residues following the 3'-CCA terminus of tRNAs; can also add nucleotides to the ends of RNA molecules by using nucleoside diphosphates as substrates, but this may not be physiologically important. Probably plays a role in initiation of 16S rRNA degradation (leading to ribosome degradation) during starvation. This Pseudomonas paraeruginosa (strain DSM 24068 / PA7) (Pseudomonas aeruginosa (strain PA7)) protein is Ribonuclease PH.